The sequence spans 77 residues: DNA-directed RNA polymerase subunit Rpo10 (77 aa).

Cys-7, Cys-10, Cys-44, and Cys-45 together coordinate Zn(2+).

Belongs to the archaeal Rpo10/eukaryotic RPB10 RNA polymerase subunit family. Part of the RNA polymerase complex. The cofactor is Zn(2+).

Its subcellular location is the cytoplasm. It catalyses the reaction RNA(n) + a ribonucleoside 5'-triphosphate = RNA(n+1) + diphosphate. Its function is as follows. DNA-dependent RNA polymerase (RNAP) catalyzes the transcription of DNA into RNA using the four ribonucleoside triphosphates as substrates. This is DNA-directed RNA polymerase subunit Rpo10 from Aeropyrum pernix (strain ATCC 700893 / DSM 11879 / JCM 9820 / NBRC 100138 / K1).